The chain runs to 70 residues: Large ribosomal subunit protein uL29 (70 aa).

Belongs to the universal ribosomal protein uL29 family.

The protein is Large ribosomal subunit protein uL29 of Gloeobacter violaceus (strain ATCC 29082 / PCC 7421).